Here is a 1109-residue protein sequence, read N- to C-terminus: Protein translocase subunit SecA (1109 aa).

Residues Gln175, 193 to 197, and Asp695 each bind ATP; that span reads GEGKT. The disordered stretch occupies residues 1038 to 1109; that stretch reads VRQAAPEQRQ…KYKNCHGRNS (72 aa). Basic and acidic residues-rich tracts occupy residues 1045 to 1059 and 1071 to 1088; these read QRQD…KQDL and DTRE…KTVG. Residues Cys1093, Cys1095, Cys1104, and His1105 each coordinate Zn(2+). Residues 1099–1109 are compositionally biased toward basic residues; that stretch reads KKYKNCHGRNS.

The protein belongs to the SecA family. As to quaternary structure, monomer and homodimer. Part of the essential Sec protein translocation apparatus which comprises SecA, SecYEG and auxiliary proteins SecDF. Other proteins may also be involved. Requires Zn(2+) as cofactor.

It localises to the cell inner membrane. Its subcellular location is the cytoplasm. It carries out the reaction ATP + H2O + cellular proteinSide 1 = ADP + phosphate + cellular proteinSide 2.. Its function is as follows. Part of the Sec protein translocase complex. Interacts with the SecYEG preprotein conducting channel. Has a central role in coupling the hydrolysis of ATP to the transfer of proteins into and across the cell membrane, serving as an ATP-driven molecular motor driving the stepwise translocation of polypeptide chains across the membrane. The polypeptide is Protein translocase subunit SecA (Bacteroides fragilis (strain ATCC 25285 / DSM 2151 / CCUG 4856 / JCM 11019 / LMG 10263 / NCTC 9343 / Onslow / VPI 2553 / EN-2)).